The chain runs to 599 residues: MRTQYCGLTSEALLDQTVSLCGWVHRRRDHGGVIFIDLRDREGLVQVVCDPDRVDVFKAAEAVRNEFCLRITGIVRHRPEGTTNSNLTSGKIEVLAHELEVLNPSVTPPFQLDDDNLSETTRLTHRVLDLRRPQMQNNLRLRYKVTMEVRKFLDAQGFIDIETPMLTKSTPEGARDYLVPSRVNAGHFFALPQSPQLFKQLLMVANFDRYYQITKCFRDEDLRADRQPEFTQIDCETSFMNEQEIRDLFEGMIRLVFKNCLNVELPNPFPVMDYATAMGMYGSDKPDMRVKLEFTDLTSIMKDVEFKVFSGAANMENGRVVGLRVPGGGAMPRSEIDAYTQFVAIYGAKGLAYIKVNEKAKGRDGLQSPIVKNIHDEALAKIIEATGAQDGDLIFFGADKAKVVNDAIGALRVKVGHSDFGKKNGLFDDEWRPLWVVDFPMFEYDEDSQRWSATHHPFTAPKDGHEDLMETNPGKCLSKAYDMVLNGWELGGGSVRIHRAEVQSKVFRALKISAEEAQLKFGFLLDALQYGAPPHGGLAFGLDRIVTMMTGAESIRDVIAFPKTQRAQCLLTQAPSEVDEKQLRELHIRLRNVEPVVKG.

Glutamate 172 provides a ligand contact to L-aspartate. Residues 196-199 (QLFK) are aspartate. Position 218 (arginine 218) interacts with L-aspartate. ATP is bound by residues 218–220 (RDE) and glutamine 227. L-aspartate is bound at residue histidine 455. Residue glutamate 489 coordinates ATP. L-aspartate is bound at residue arginine 496. 541 to 544 (GLDR) lines the ATP pocket.

Belongs to the class-II aminoacyl-tRNA synthetase family. Type 1 subfamily. In terms of assembly, homodimer.

The protein localises to the cytoplasm. The catalysed reaction is tRNA(Asx) + L-aspartate + ATP = L-aspartyl-tRNA(Asx) + AMP + diphosphate. Aspartyl-tRNA synthetase with relaxed tRNA specificity since it is able to aspartylate not only its cognate tRNA(Asp) but also tRNA(Asn). Reaction proceeds in two steps: L-aspartate is first activated by ATP to form Asp-AMP and then transferred to the acceptor end of tRNA(Asp/Asn). This is Aspartate--tRNA(Asp/Asn) ligase from Herminiimonas arsenicoxydans.